The chain runs to 515 residues: Putative ammonium transporter 2 (515 aa).

A run of 12 helical transmembrane segments spans residues 34–54, 72–92, 124–144, 156–176, 191–211, 226–246, 266–286, 291–311, 321–337, 346–366, 381–401, and 404–424; these read GVWM…FGLL, VFDV…LTFG, GISY…STIV, SHCF…HWVW, AGCS…TLYL, VSDP…WLAF, AVGT…ITRL, IQMD…TGGC, LVGA…YPVT, VGVF…PAIF, FQTS…LLFL, and FVIL…LFLI.

This sequence belongs to the ammonia transporter channel (TC 1.A.11.2) family.

The protein localises to the membrane. Functionally, involved in the uptake of ammonia. Implicated in aging. In Caenorhabditis elegans, this protein is Putative ammonium transporter 2 (amt-2).